Here is a 396-residue protein sequence, read N- to C-terminus: Ribosomal RNA large subunit methyltransferase I (396 aa).

The PUA domain occupies 2 to 81 (TVSIYLAKGR…EAIDKDFFVR (80 aa)).

Belongs to the methyltransferase superfamily. RlmI family.

The protein localises to the cytoplasm. The enzyme catalyses cytidine(1962) in 23S rRNA + S-adenosyl-L-methionine = 5-methylcytidine(1962) in 23S rRNA + S-adenosyl-L-homocysteine + H(+). Specifically methylates the cytosine at position 1962 (m5C1962) of 23S rRNA. This Aliivibrio fischeri (strain ATCC 700601 / ES114) (Vibrio fischeri) protein is Ribosomal RNA large subunit methyltransferase I.